Here is a 68-residue protein sequence, read N- to C-terminus: DNA-directed RNA polymerase subunit omega (68 aa).

Belongs to the RNA polymerase subunit omega family. In terms of assembly, the RNAP catalytic core consists of 2 alpha, 1 beta, 1 beta' and 1 omega subunit. When a sigma factor is associated with the core the holoenzyme is formed, which can initiate transcription.

The catalysed reaction is RNA(n) + a ribonucleoside 5'-triphosphate = RNA(n+1) + diphosphate. In terms of biological role, promotes RNA polymerase assembly. Latches the N- and C-terminal regions of the beta' subunit thereby facilitating its interaction with the beta and alpha subunits. This is DNA-directed RNA polymerase subunit omega from Alkaliphilus metalliredigens (strain QYMF).